The following is a 218-amino-acid chain: Probable nicotinate-nucleotide adenylyltransferase (218 aa).

This sequence belongs to the NadD family.

The catalysed reaction is nicotinate beta-D-ribonucleotide + ATP + H(+) = deamido-NAD(+) + diphosphate. Its pathway is cofactor biosynthesis; NAD(+) biosynthesis; deamido-NAD(+) from nicotinate D-ribonucleotide: step 1/1. Its function is as follows. Catalyzes the reversible adenylation of nicotinate mononucleotide (NaMN) to nicotinic acid adenine dinucleotide (NaAD). In Syntrophotalea carbinolica (strain DSM 2380 / NBRC 103641 / GraBd1) (Pelobacter carbinolicus), this protein is Probable nicotinate-nucleotide adenylyltransferase.